The following is a 449-amino-acid chain: 23S rRNA (uracil(1939)-C(5))-methyltransferase RlmD (449 aa).

Residues S12–K70 form the TRAM domain. [4Fe-4S] cluster is bound by residues C83, C89, C92, and C170. Residues Q282, F311, N316, E332, D359, and D379 each coordinate S-adenosyl-L-methionine. C405 acts as the Nucleophile in catalysis.

Belongs to the class I-like SAM-binding methyltransferase superfamily. RNA M5U methyltransferase family. RlmD subfamily.

It carries out the reaction uridine(1939) in 23S rRNA + S-adenosyl-L-methionine = 5-methyluridine(1939) in 23S rRNA + S-adenosyl-L-homocysteine + H(+). Catalyzes the formation of 5-methyl-uridine at position 1939 (m5U1939) in 23S rRNA. This Shewanella sp. (strain ANA-3) protein is 23S rRNA (uracil(1939)-C(5))-methyltransferase RlmD.